Here is a 387-residue protein sequence, read N- to C-terminus: Norsolorinic acid reductase stcV (387 aa).

Asp69 provides a ligand contact to NADP(+). The active-site Proton donor is the Tyr74. Residue His148 coordinates substrate. NADP(+)-binding positions include 178 to 179 (SD), Gln204, 233 to 243 (GALGRGQYKSA), and 301 to 309 (RTVEQLEAN).

The protein belongs to the aldo/keto reductase family. Aldo/keto reductase 2 subfamily.

Its pathway is mycotoxin biosynthesis; sterigmatocystin biosynthesis. Its function is as follows. Norsolorinic acid reductase; part of the gene cluster that mediates the biosynthesis of sterigmatocystin (ST), a polyketide-derived furanocoumarin which is part of the most toxic and carcinogenic compounds among the known mycotoxins. The first step in the biosynthesis of sterigmatocystin is the production of hexanoate by the fatty acid synthase (FAS) units stcJ and stcK. The polyketide backbone is assembled by the non-reducing polyketide synthase stcA by condensation of the starter hexanoyl-CoA and 7 malonyl-CoA extender units followed by cyclization and release of norsolorinic acid. Norsolorinic acid is the first stable intermediate in the biosynthesis of sterigmatocystin and is converted into averantin (AVN) by the ketoreductase stcE which reduces the hexanoate ketone to an alcohol. Averantin is then oxidized into 5'-hydroxyaverantin (HAVN) by the cytochrome P450 monooxygenase stcF. 5'-hydroxyaverantin is further converted to 5'-oxyaverantin (OAVN) by the 5'-hydroxyaverantin dehydrogenase stcG. The next step is the conversion of OAVN into averufin (AVF) which is catalyzed by a yet to be identified enzyme. The cytochrome P450 monooxygenase stcB and the flavin-binding monooxygenase stcW are both required for the conversion of averufin to 1-hydroxyversicolorone. The esterase stcI probably catalyzes the formation of versiconal hemiacetal acetate from 1-hydroxyversicolorone. The oxydoreductase stcN then probably catalyzes the biosynthetic step from versiconal to versicolorin B (VERB). The next step is performed by the versicolorin B desaturase stcL to produce versicolorin A (VERA). The ketoreductase stcU and the cytochrome P450 monooxygenase stcS are involved in the conversion of versicolorin A to demethylsterigmatocystin. The Baeyer-Villiger oxidas stcQ and the reductase stcR might be involved in the biosynthetic step from versicolorin A to demethylsterigmatocystin. The final step in the biosynthesis of sterigmatocystin is the methylation of demethylsterigmatocystin catalyzed by the methyltransferase stcP. The sequence is that of Norsolorinic acid reductase stcV from Emericella nidulans (strain FGSC A4 / ATCC 38163 / CBS 112.46 / NRRL 194 / M139) (Aspergillus nidulans).